The chain runs to 713 residues: Major surface-labeled trophozoite antigen 417 (713 aa).

Positions 1 to 17 (MFGRFLLAIVILQLART) are cleaved as a signal peptide. Residues 18 to 679 (ACTQEADDGK…KDSGSTNKSG (662 aa)) are Extracellular-facing. 2 N-linked (GlcNAc...) asparagine glycosylation sites follow: Asn289 and Asn676. Residues 680–708 (LSTGAIAGISVAVIVVVGGLIGFLCWWFL) traverse the membrane as a helical segment. The Cytoplasmic segment spans residues 709-713 (CRGKA).

This sequence belongs to the Giardia variant surface protein family.

The protein resides in the cell membrane. This Giardia intestinalis (Giardia lamblia) protein is Major surface-labeled trophozoite antigen 417 (TSA 417).